The primary structure comprises 152 residues: Deoxyuridine 5'-triphosphate nucleotidohydrolase (152 aa).

Substrate-binding positions include 71-73, Asn84, 88-90, and Met98; these read RSG and LID.

This sequence belongs to the dUTPase family. The cofactor is Mg(2+).

It catalyses the reaction dUTP + H2O = dUMP + diphosphate + H(+). It functions in the pathway pyrimidine metabolism; dUMP biosynthesis; dUMP from dCTP (dUTP route): step 2/2. This enzyme is involved in nucleotide metabolism: it produces dUMP, the immediate precursor of thymidine nucleotides and it decreases the intracellular concentration of dUTP so that uracil cannot be incorporated into DNA. This is Deoxyuridine 5'-triphosphate nucleotidohydrolase from Shewanella halifaxensis (strain HAW-EB4).